The following is a 231-amino-acid chain: MRVKFHTTGETIMTQDELKKAVGWAALQYVQPGTIVGVGTGSTAAHFINALGTMKGQIEGAVSSSDASTEKLKSLGIHVFDLNEVDSLGIYVDGADEINGHMQMIKGGGAALTREKIIASVAEKFICIADASKQVDILGKFPLPVEVIPMARSAVARQLVKLGGRPEYRQGVVTDNGNVILDVHGMEILGPDSDGKRHKCDSWRGDCWFVANRGADVALIGTPDGVKTIVK.

Substrate is bound by residues 40–43 (TGST), 93–96 (DGAD), and 106–109 (KGGG). The active-site Proton acceptor is glutamate 115. Position 133 (lysine 133) interacts with substrate.

Belongs to the ribose 5-phosphate isomerase family. In terms of assembly, homodimer.

The enzyme catalyses aldehydo-D-ribose 5-phosphate = D-ribulose 5-phosphate. Its pathway is carbohydrate degradation; pentose phosphate pathway; D-ribose 5-phosphate from D-ribulose 5-phosphate (non-oxidative stage): step 1/1. Functionally, catalyzes the reversible conversion of ribose-5-phosphate to ribulose 5-phosphate. This Escherichia coli O6:K15:H31 (strain 536 / UPEC) protein is Ribose-5-phosphate isomerase A.